Consider the following 354-residue polypeptide: DNA polymerase IV (354 aa).

The UmuC domain occupies 8–189 (IIHIDMDCFY…LPLQKIPGVG (182 aa)). Residues Asp-12 and Asp-107 each coordinate Mg(2+). Residue Glu-108 is part of the active site.

It belongs to the DNA polymerase type-Y family. Monomer. The cofactor is Mg(2+).

It localises to the cytoplasm. It carries out the reaction DNA(n) + a 2'-deoxyribonucleoside 5'-triphosphate = DNA(n+1) + diphosphate. Functionally, poorly processive, error-prone DNA polymerase involved in untargeted mutagenesis. Copies undamaged DNA at stalled replication forks, which arise in vivo from mismatched or misaligned primer ends. These misaligned primers can be extended by PolIV. Exhibits no 3'-5' exonuclease (proofreading) activity. May be involved in translesional synthesis, in conjunction with the beta clamp from PolIII. The chain is DNA polymerase IV from Vibrio vulnificus (strain CMCP6).